Reading from the N-terminus, the 93-residue chain is UPF0473 protein YrzB (93 aa).

This sequence belongs to the UPF0473 family.

This chain is UPF0473 protein YrzB (yrzB), found in Bacillus subtilis (strain 168).